Consider the following 78-residue polypeptide: RNA-binding protein Hfq (78 aa).

Residues 10 to 70 (DLFLNSVRKQ…ISTIMPSQPV (61 aa)) form the Sm domain.

This sequence belongs to the Hfq family. As to quaternary structure, homohexamer.

Its function is as follows. RNA chaperone that binds small regulatory RNA (sRNAs) and mRNAs to facilitate mRNA translational regulation in response to envelope stress, environmental stress and changes in metabolite concentrations. Also binds with high specificity to tRNAs. The sequence is that of RNA-binding protein Hfq from Brucella abortus (strain S19).